Consider the following 359-residue polypeptide: DNA polymerase IV (359 aa).

The UmuC domain maps to 4-185 (IIHIDMDCYF…LSLRKIPGVG (182 aa)). Mg(2+) contacts are provided by aspartate 8 and aspartate 103. Glutamate 104 is a catalytic residue.

The protein belongs to the DNA polymerase type-Y family. In terms of assembly, monomer. Requires Mg(2+) as cofactor.

It localises to the cytoplasm. The enzyme catalyses DNA(n) + a 2'-deoxyribonucleoside 5'-triphosphate = DNA(n+1) + diphosphate. In terms of biological role, poorly processive, error-prone DNA polymerase involved in untargeted mutagenesis. Copies undamaged DNA at stalled replication forks, which arise in vivo from mismatched or misaligned primer ends. These misaligned primers can be extended by PolIV. Exhibits no 3'-5' exonuclease (proofreading) activity. May be involved in translesional synthesis, in conjunction with the beta clamp from PolIII. The sequence is that of DNA polymerase IV from Shewanella sp. (strain MR-7).